A 464-amino-acid polypeptide reads, in one-letter code: Putative major capsid protein (464 aa).

Residues 1 to 20 (MTEKKNTERQLTSVQEEVIK) constitute a propeptide that is removed on maturation. Residues 423-445 (LAQVNASVTFAVLWYGALALRAP) traverse the membrane as a helical segment.

It is found in the virion. The protein localises to the host membrane. This Enterococcus faecalis (Streptococcus faecalis) protein is Putative major capsid protein.